The chain runs to 94 residues: Probable Fe(2+)-trafficking protein (94 aa).

This sequence belongs to the Fe(2+)-trafficking protein family.

Could be a mediator in iron transactions between iron acquisition and iron-requiring processes, such as synthesis and/or repair of Fe-S clusters in biosynthetic enzymes. In Haemophilus ducreyi (strain 35000HP / ATCC 700724), this protein is Probable Fe(2+)-trafficking protein.